Consider the following 227-residue polypeptide: Cytochrome c oxidase subunit 2 (227 aa).

Over 1 to 14 (MAYPLQLGLQDATS) the chain is Mitochondrial intermembrane. The chain crosses the membrane as a helical span at residues 15–45 (PIMEELMNFHDHTLMIVFLISSLVLYVISSM). At 46-59 (LTTKLTHTSTMDAQ) the chain is on the mitochondrial matrix side. A helical transmembrane segment spans residues 60-87 (EVETIWTILPAVILIMIALPSLRILYMM). Topologically, residues 88–227 (DEINNPVLTV…NFETWSVSMI (140 aa)) are mitochondrial intermembrane. 6 residues coordinate Cu cation: His-161, Cys-196, Glu-198, Cys-200, His-204, and Met-207. Residue Glu-198 participates in Mg(2+) binding.

The protein belongs to the cytochrome c oxidase subunit 2 family. Component of the cytochrome c oxidase (complex IV, CIV), a multisubunit enzyme composed of 14 subunits. The complex is composed of a catalytic core of 3 subunits MT-CO1, MT-CO2 and MT-CO3, encoded in the mitochondrial DNA, and 11 supernumerary subunits COX4I, COX5A, COX5B, COX6A, COX6B, COX6C, COX7A, COX7B, COX7C, COX8 and NDUFA4, which are encoded in the nuclear genome. The complex exists as a monomer or a dimer and forms supercomplexes (SCs) in the inner mitochondrial membrane with NADH-ubiquinone oxidoreductase (complex I, CI) and ubiquinol-cytochrome c oxidoreductase (cytochrome b-c1 complex, complex III, CIII), resulting in different assemblies (supercomplex SCI(1)III(2)IV(1) and megacomplex MCI(2)III(2)IV(2)). Found in a complex with TMEM177, COA6, COX18, COX20, SCO1 and SCO2. Interacts with TMEM177 in a COX20-dependent manner. Interacts with COX20. Interacts with COX16. It depends on Cu cation as a cofactor.

It localises to the mitochondrion inner membrane. It carries out the reaction 4 Fe(II)-[cytochrome c] + O2 + 8 H(+)(in) = 4 Fe(III)-[cytochrome c] + 2 H2O + 4 H(+)(out). In terms of biological role, component of the cytochrome c oxidase, the last enzyme in the mitochondrial electron transport chain which drives oxidative phosphorylation. The respiratory chain contains 3 multisubunit complexes succinate dehydrogenase (complex II, CII), ubiquinol-cytochrome c oxidoreductase (cytochrome b-c1 complex, complex III, CIII) and cytochrome c oxidase (complex IV, CIV), that cooperate to transfer electrons derived from NADH and succinate to molecular oxygen, creating an electrochemical gradient over the inner membrane that drives transmembrane transport and the ATP synthase. Cytochrome c oxidase is the component of the respiratory chain that catalyzes the reduction of oxygen to water. Electrons originating from reduced cytochrome c in the intermembrane space (IMS) are transferred via the dinuclear copper A center (CU(A)) of subunit 2 and heme A of subunit 1 to the active site in subunit 1, a binuclear center (BNC) formed by heme A3 and copper B (CU(B)). The BNC reduces molecular oxygen to 2 water molecules using 4 electrons from cytochrome c in the IMS and 4 protons from the mitochondrial matrix. This Malacothrix typica (Long-eared mouse) protein is Cytochrome c oxidase subunit 2 (MT-CO2).